Consider the following 25-residue polypeptide: Endoglucanase 1 (25 aa).

The segment at 1 to 25 (YDASLKPNLQIPQKNIPNNDAVNIK) is disordered. Positions 10-25 (QIPQKNIPNNDAVNIK) are enriched in polar residues.

It catalyses the reaction Endohydrolysis of (1-&gt;4)-beta-D-glucosidic linkages in cellulose, lichenin and cereal beta-D-glucans.. Functionally, this enzyme hydrolyzes cellotetraose, cellopentaose, and cellohexaose to cellobiose and cellotriose but does not hydrolyze cellobiose or cellotriose. This is Endoglucanase 1 from Ruminiclostridium josui (Clostridium josui).